A 118-amino-acid chain; its full sequence is Small ribosomal subunit protein uS13 (118 aa).

Residues Gly-99–Lys-118 are disordered.

It belongs to the universal ribosomal protein uS13 family. Part of the 30S ribosomal subunit. Forms a loose heterodimer with protein S19. Forms two bridges to the 50S subunit in the 70S ribosome.

Located at the top of the head of the 30S subunit, it contacts several helices of the 16S rRNA. In the 70S ribosome it contacts the 23S rRNA (bridge B1a) and protein L5 of the 50S subunit (bridge B1b), connecting the 2 subunits; these bridges are implicated in subunit movement. Contacts the tRNAs in the A and P-sites. This Xylella fastidiosa (strain M12) protein is Small ribosomal subunit protein uS13.